The following is a 143-amino-acid chain: Transcriptional regulator MraZ (143 aa).

SpoVT-AbrB domains lie at 5–47 (EYRH…PQVE) and 76–119 (ATEC…SKEL).

Belongs to the MraZ family. As to quaternary structure, forms oligomers.

Its subcellular location is the cytoplasm. The protein localises to the nucleoid. The sequence is that of Transcriptional regulator MraZ from Halalkalibacterium halodurans (strain ATCC BAA-125 / DSM 18197 / FERM 7344 / JCM 9153 / C-125) (Bacillus halodurans).